Consider the following 369-residue polypeptide: 4-hydroxy-3-methylbut-2-en-1-yl diphosphate synthase (flavodoxin) (369 aa).

4 residues coordinate [4Fe-4S] cluster: Cys-270, Cys-273, Cys-305, and Glu-312.

It belongs to the IspG family. The cofactor is [4Fe-4S] cluster.

It catalyses the reaction (2E)-4-hydroxy-3-methylbut-2-enyl diphosphate + oxidized [flavodoxin] + H2O + 2 H(+) = 2-C-methyl-D-erythritol 2,4-cyclic diphosphate + reduced [flavodoxin]. The protein operates within isoprenoid biosynthesis; isopentenyl diphosphate biosynthesis via DXP pathway; isopentenyl diphosphate from 1-deoxy-D-xylulose 5-phosphate: step 5/6. Functionally, converts 2C-methyl-D-erythritol 2,4-cyclodiphosphate (ME-2,4cPP) into 1-hydroxy-2-methyl-2-(E)-butenyl 4-diphosphate. The protein is 4-hydroxy-3-methylbut-2-en-1-yl diphosphate synthase (flavodoxin) of Haemophilus ducreyi (strain 35000HP / ATCC 700724).